Here is a 357-residue protein sequence, read N- to C-terminus: Histidinol-phosphate aminotransferase (357 aa).

K222 carries the post-translational modification N6-(pyridoxal phosphate)lysine.

This sequence belongs to the class-II pyridoxal-phosphate-dependent aminotransferase family. Histidinol-phosphate aminotransferase subfamily. In terms of assembly, homodimer. Requires pyridoxal 5'-phosphate as cofactor.

The catalysed reaction is L-histidinol phosphate + 2-oxoglutarate = 3-(imidazol-4-yl)-2-oxopropyl phosphate + L-glutamate. Its pathway is amino-acid biosynthesis; L-histidine biosynthesis; L-histidine from 5-phospho-alpha-D-ribose 1-diphosphate: step 7/9. In Leuconostoc mesenteroides subsp. mesenteroides (strain ATCC 8293 / DSM 20343 / BCRC 11652 / CCM 1803 / JCM 6124 / NCDO 523 / NBRC 100496 / NCIMB 8023 / NCTC 12954 / NRRL B-1118 / 37Y), this protein is Histidinol-phosphate aminotransferase.